A 91-amino-acid chain; its full sequence is Cell division protein FtsB (91 aa).

Topologically, residues 1–3 (MKW) are cytoplasmic. A helical membrane pass occupies residues 4–21 (LVAVLVVFVAMFQYRLWV). The Periplasmic segment spans residues 22 to 91 (GEGSIADVVR…ETFFMIIDDQ (70 aa)). A coiled-coil region spans residues 23–63 (EGSIADVVRLEREIARQEADNERLRERNKQLAAEVDALKTG).

Belongs to the FtsB family. Part of a complex composed of FtsB, FtsL and FtsQ.

The protein resides in the cell inner membrane. Its function is as follows. Essential cell division protein. May link together the upstream cell division proteins, which are predominantly cytoplasmic, with the downstream cell division proteins, which are predominantly periplasmic. The chain is Cell division protein FtsB from Teredinibacter turnerae (strain ATCC 39867 / T7901).